Consider the following 72-residue polypeptide: Translation initiation factor IF-1 (72 aa).

An S1-like domain is found at M1–R72.

It belongs to the IF-1 family. As to quaternary structure, component of the 30S ribosomal translation pre-initiation complex which assembles on the 30S ribosome in the order IF-2 and IF-3, IF-1 and N-formylmethionyl-tRNA(fMet); mRNA recruitment can occur at any time during PIC assembly.

The protein resides in the cytoplasm. Its function is as follows. One of the essential components for the initiation of protein synthesis. Stabilizes the binding of IF-2 and IF-3 on the 30S subunit to which N-formylmethionyl-tRNA(fMet) subsequently binds. Helps modulate mRNA selection, yielding the 30S pre-initiation complex (PIC). Upon addition of the 50S ribosomal subunit IF-1, IF-2 and IF-3 are released leaving the mature 70S translation initiation complex. This is Translation initiation factor IF-1 from Photobacterium profundum (strain SS9).